The chain runs to 420 residues: Glutamate-1-semialdehyde 2,1-aminomutase (420 aa).

N6-(pyridoxal phosphate)lysine is present on Lys259.

This sequence belongs to the class-III pyridoxal-phosphate-dependent aminotransferase family. HemL subfamily. As to quaternary structure, homodimer. The cofactor is pyridoxal 5'-phosphate.

It is found in the cytoplasm. It catalyses the reaction (S)-4-amino-5-oxopentanoate = 5-aminolevulinate. The protein operates within porphyrin-containing compound metabolism; protoporphyrin-IX biosynthesis; 5-aminolevulinate from L-glutamyl-tRNA(Glu): step 2/2. This chain is Glutamate-1-semialdehyde 2,1-aminomutase, found in Nautilia profundicola (strain ATCC BAA-1463 / DSM 18972 / AmH).